Reading from the N-terminus, the 304-residue chain is Protein Largen (304 aa).

Over residues 1–22 (MSAKSKGNPSSSSAAEGPPAAS) the composition is skewed to low complexity. Disordered regions lie at residues 1-27 (MSAK…TKVK), 66-109 (QLED…PPAH), 114-133 (LTVL…TPVR), and 236-304 (EPVH…TTTV). A coiled-coil region spans residues 33–70 (IVEDLELVLGDLKDVAKELKEVVDQIDTLTSDLQLEDE). Low complexity predominate over residues 77–91 (TDTLNSSSSGTTASS). 2 stretches are compositionally biased toward pro residues: residues 120–129 (PNPPPPPPRL) and 275–289 (FPPP…PAAP).

In terms of biological role, regulator of cell size that promotes cell size increase independently of mTOR and Hippo signaling pathways. Acts by stimulating the translation of specific mRNAs, including those encoding proteins affecting mitochondrial functions. Increases mitochondrial mass and respiration. This is Protein Largen (Prr16) from Mus musculus (Mouse).